The primary structure comprises 229 residues: Ribose-5-phosphate isomerase A (229 aa).

Substrate contacts are provided by residues Thr28 to Thr31, Asp85 to Asp88, and Lys98 to Gly101. Glu107 serves as the catalytic Proton acceptor. Lys125 lines the substrate pocket.

This sequence belongs to the ribose 5-phosphate isomerase family. As to quaternary structure, homodimer.

The enzyme catalyses aldehydo-D-ribose 5-phosphate = D-ribulose 5-phosphate. Its pathway is carbohydrate degradation; pentose phosphate pathway; D-ribose 5-phosphate from D-ribulose 5-phosphate (non-oxidative stage): step 1/1. In terms of biological role, catalyzes the reversible conversion of ribose-5-phosphate to ribulose 5-phosphate. The polypeptide is Ribose-5-phosphate isomerase A (Thermococcus kodakarensis (strain ATCC BAA-918 / JCM 12380 / KOD1) (Pyrococcus kodakaraensis (strain KOD1))).